Consider the following 1057-residue polypeptide: Exportin-1 (1057 aa).

An Importin N-terminal domain is found at 36-102; sequence AQMVLGKFQE…KNYIVSLIIR (67 aa). 11 HEAT repeats span residues 239-275, 281-321, 462-501, 506-544, 551-588, 596-633, 739-776, 781-818, 855-892, 902-925, and 926-965; these read AEPSKLVKLLLHKYFPEPLFRNSTLKCLTEIGNLNLG, AVFI…FIHT, NTQHIMLEKLQTLISGREFTFQRLNTLCWAIGSISGAQNK, RFLVTVIKDLLELCQNKKGKDNKAVIASDIMYIVGQYPR, KFLKTVVNKLFEFMHESHPGVQDMACDTFLKISKQCKR, EESQPFINELLNQLSTTIAHLEQSQIHTFYEAVGYMIA, KETLKLLETFIEKSSDKQVIYSNFLQPLLEAVLGDYRT, TRDPEVLSLMTAIITSLKQLVHPEVPKILEAVFETTLS, QQFKLLIDCVVWAFKHTERNISETGLHILKELIENVSK, KTYLVSLLNDILYILTDSFHKSGF, and ALECDILRMMFQVVENGVVKIPLFDPQQANFPSNSEYVKE.

The protein belongs to the exportin family. In terms of assembly, component of a nuclear export receptor complex.

It localises to the nucleus. Its subcellular location is the cytoplasm. The protein resides in the perinuclear region. In terms of biological role, mediates the nuclear export of cellular proteins (cargos) bearing a leucine-rich nuclear export signal (NES). This Dictyostelium discoideum (Social amoeba) protein is Exportin-1 (xpo1).